The sequence spans 323 residues: Putative CDC123-like protein L884 (323 aa).

It belongs to the CDC123 family.

This is Putative CDC123-like protein L884 from Acanthamoeba polyphaga mimivirus (APMV).